A 62-amino-acid polypeptide reads, in one-letter code: Large ribosomal subunit protein bL28 (62 aa).

This sequence belongs to the bacterial ribosomal protein bL28 family.

This Thermoanaerobacter sp. (strain X514) protein is Large ribosomal subunit protein bL28.